We begin with the raw amino-acid sequence, 164 residues long: Transcriptional repressor NrdR (164 aa).

The segment at 3–34 (CPKCNYNKSSVVDSRQAEDGNTIRRRRECESC) is a zinc-finger region. Positions 49-139 (LLVIKKDGTR…VYKSFKDLDE (91 aa)) constitute an ATP-cone domain.

It belongs to the NrdR family. It depends on Zn(2+) as a cofactor.

Negatively regulates transcription of bacterial ribonucleotide reductase nrd genes and operons by binding to NrdR-boxes. The polypeptide is Transcriptional repressor NrdR (Streptococcus equi subsp. zooepidemicus (strain H70)).